The chain runs to 109 residues: Flagellar hook-basal body complex protein FliE (109 aa).

The protein belongs to the FliE family.

The protein localises to the bacterial flagellum basal body. The protein is Flagellar hook-basal body complex protein FliE of Pseudomonas savastanoi pv. phaseolicola (strain 1448A / Race 6) (Pseudomonas syringae pv. phaseolicola (strain 1448A / Race 6)).